A 91-amino-acid chain; its full sequence is DNA-directed RNA polymerase subunit omega (91 aa).

Belongs to the RNA polymerase subunit omega family. As to quaternary structure, the RNAP catalytic core consists of 2 alpha, 1 beta, 1 beta' and 1 omega subunit. When a sigma factor is associated with the core the holoenzyme is formed, which can initiate transcription.

It carries out the reaction RNA(n) + a ribonucleoside 5'-triphosphate = RNA(n+1) + diphosphate. Its function is as follows. Promotes RNA polymerase assembly. Latches the N- and C-terminal regions of the beta' subunit thereby facilitating its interaction with the beta and alpha subunits. The polypeptide is DNA-directed RNA polymerase subunit omega (Yersinia enterocolitica serotype O:8 / biotype 1B (strain NCTC 13174 / 8081)).